Here is a 145-residue protein sequence, read N- to C-terminus: Large ribosomal subunit protein cL37 (145 aa).

Residues M1–S63 constitute a chloroplast transit peptide. Residues K125–V145 are disordered.

It belongs to the chloroplast-specific ribosomal protein cL37 family. Part of the 50S ribosomal subunit.

It localises to the plastid. Its subcellular location is the chloroplast. The sequence is that of Large ribosomal subunit protein cL37 (PSRP5) from Pisum sativum (Garden pea).